The following is a 240-amino-acid chain: uncharacterized protein (240 aa).

Residues 197–210 (PLKSHSASRLNHLT) show a composition bias toward polar residues. A disordered region spans residues 197-222 (PLKSHSASRLNHLTPSPRPGETPLEN).

This is an uncharacterized protein from Caenorhabditis elegans.